The primary structure comprises 122 residues: MARIAGVNIPTNKRVLIALQYIHGIGQKHAADIVEKVKIPLDRRVNQLSDQEVLQIREVIDRDYMVEGDLRRETGMNIKRLMDLGCYRGLRHRRGLPVRGQRTHTNARTRKGPAKAIAGKKK.

The interval 99-122 (RGQRTHTNARTRKGPAKAIAGKKK) is disordered.

Belongs to the universal ribosomal protein uS13 family. Part of the 30S ribosomal subunit. Forms a loose heterodimer with protein S19. Forms two bridges to the 50S subunit in the 70S ribosome.

Functionally, located at the top of the head of the 30S subunit, it contacts several helices of the 16S rRNA. In the 70S ribosome it contacts the 23S rRNA (bridge B1a) and protein L5 of the 50S subunit (bridge B1b), connecting the 2 subunits; these bridges are implicated in subunit movement. Contacts the tRNAs in the A and P-sites. This is Small ribosomal subunit protein uS13 from Rhodopseudomonas palustris (strain BisA53).